Here is a 489-residue protein sequence, read N- to C-terminus: Glutamyl-tRNA(Gln) amidotransferase subunit A (489 aa).

Active-site charge relay system residues include Lys-80 and Ser-160. Residue Ser-184 is the Acyl-ester intermediate of the active site.

The protein belongs to the amidase family. GatA subfamily. Heterotrimer of A, B and C subunits.

The catalysed reaction is L-glutamyl-tRNA(Gln) + L-glutamine + ATP + H2O = L-glutaminyl-tRNA(Gln) + L-glutamate + ADP + phosphate + H(+). Allows the formation of correctly charged Gln-tRNA(Gln) through the transamidation of misacylated Glu-tRNA(Gln) in organisms which lack glutaminyl-tRNA synthetase. The reaction takes place in the presence of glutamine and ATP through an activated gamma-phospho-Glu-tRNA(Gln). The polypeptide is Glutamyl-tRNA(Gln) amidotransferase subunit A (Wolbachia sp. subsp. Brugia malayi (strain TRS)).